We begin with the raw amino-acid sequence, 852 residues long: Cell surface glycoprotein (852 aa).

A signal peptide spans M1–A34. N36 is a glycosylation site (N-linked (GalNAc...) (glycosaminoglycan) asparagine). Positions K84–A131 are disordered. Positions D115–P126 are enriched in polar residues. N-linked (Glc...) asparagine glycosylation is found at N339, N398, N438, N513, N643, N727, N751, and N787. Residues E772–S828 form a disordered region. Low complexity predominate over residues E785 to G823. O-linked (Gal...) threonine glycosylation is found at T789, T791, T792, T793, T795, T797, T798, T799, T801, T802, T803, T806, T807, and T808. A glycan (N-linked (Glc...) asparagine) is linked at N811. Residues T812 and T813 are each glycosylated (O-linked (Gal...) threonine). N-linked (Glc...) asparagine glycosylation occurs at N815. The chain crosses the membrane as a helical span at residues I829–L849. Positions P830–F832 match the PGF sorting signal motif.

This sequence belongs to the halobacterial S-layer protein family. In terms of processing, N-linked glycan at Asn-36 consists of a glycosaminoglycan chain, constructed by a repeating sulfated pentasaccharide block composed of GlcNAc, GalNAc, Gal, GalA, 3-O-methyl-GalA, and sulfate in the molar ratio of 1:1:1:1:1:2; the other N-linked glycans contain Glc, GlcA and IdoA. Post-translationally, O-linked glycans consist of Glc-Gal disaccharides. The C-terminus (residues 770-778) is lipidated with diphytanylglyceryl phosphate. In terms of processing, cleaved by the archaeosortase ArtA at the C-terminus, with removal of a short hydrophobic segment.

It localises to the secreted. The protein localises to the cell wall. The protein resides in the S-layer. Its subcellular location is the cell membrane. In terms of biological role, S-layer protein. The S-layer is a paracrystalline mono-layered assembly of proteins which coat the surface of the cell. This chain is Cell surface glycoprotein (csg), found in Halobacterium salinarum (strain ATCC 29341 / DSM 671 / R1).